Here is a 287-residue protein sequence, read N- to C-terminus: mRNA-capping enzyme regulatory subunit OPG124 (287 aa).

It belongs to the orthopoxvirus mRNA-capping enzyme regulatory subunit family. Interacts with the late transcription elongation factor VLTF-4/OPG110. Interacts with the late transcription factors VLTF-1.

The protein localises to the virion. Acts with RNA polymerase to initiate transcription from late gene promoters. This Monkeypox virus protein is mRNA-capping enzyme regulatory subunit OPG124 (OPG124).